The chain runs to 271 residues: 2-dehydro-3-deoxyphosphooctonate aldolase (271 aa).

This sequence belongs to the KdsA family.

The protein resides in the cytoplasm. It carries out the reaction D-arabinose 5-phosphate + phosphoenolpyruvate + H2O = 3-deoxy-alpha-D-manno-2-octulosonate-8-phosphate + phosphate. The protein operates within carbohydrate biosynthesis; 3-deoxy-D-manno-octulosonate biosynthesis; 3-deoxy-D-manno-octulosonate from D-ribulose 5-phosphate: step 2/3. It functions in the pathway bacterial outer membrane biogenesis; lipopolysaccharide biosynthesis. The sequence is that of 2-dehydro-3-deoxyphosphooctonate aldolase from Campylobacter jejuni subsp. jejuni serotype O:2 (strain ATCC 700819 / NCTC 11168).